Reading from the N-terminus, the 420-residue chain is UDP-N-acetylglucosamine 1-carboxyvinyltransferase (420 aa).

Phosphoenolpyruvate is bound at residue 22–23; the sequence is KN. A UDP-N-acetyl-alpha-D-glucosamine-binding site is contributed by R91. C115 functions as the Proton donor in the catalytic mechanism. C115 is modified (2-(S-cysteinyl)pyruvic acid O-phosphothioketal). Residues 120 to 124, 160 to 163, D305, and I327 contribute to the UDP-N-acetyl-alpha-D-glucosamine site; these read RPVDL and KVSV.

This sequence belongs to the EPSP synthase family. MurA subfamily.

It localises to the cytoplasm. It carries out the reaction phosphoenolpyruvate + UDP-N-acetyl-alpha-D-glucosamine = UDP-N-acetyl-3-O-(1-carboxyvinyl)-alpha-D-glucosamine + phosphate. It participates in cell wall biogenesis; peptidoglycan biosynthesis. Functionally, cell wall formation. Adds enolpyruvyl to UDP-N-acetylglucosamine. This is UDP-N-acetylglucosamine 1-carboxyvinyltransferase from Proteus mirabilis (strain HI4320).